A 454-amino-acid chain; its full sequence is SH2 domain-containing protein 4A (454 aa).

Disordered stretches follow at residues 45-65 (AMER…NGKS), 107-131 (EQEA…KSQY), 152-177 (KEEL…SSSS), and 237-302 (RKSK…AYPQ). Residues 107–120 (EQEAEEPRKTHSEE) show a composition bias toward basic and acidic residues. 2 positions are modified to phosphoserine: Ser118 and Ser124. A compositionally biased stretch (basic and acidic residues) spans 240–259 (KAADEKRRSLAKQAREDYKR). 2 positions are modified to phosphoserine: Ser261 and Ser315. Residues 347-440 (WFHGILTLKK…LGKELLLYPC (94 aa)) form the SH2 domain.

As to quaternary structure, interacts with ESR1. As to expression, ubiquitously expressed. Aberrantly expressed in some cancers.

The protein resides in the cytoplasm. In terms of biological role, inhibits estrogen-induced cell proliferation by competing with PLCG for binding to ESR1, blocking the effect of estrogen on PLCG and repressing estrogen-induced proliferation. May play a role in T-cell development and function. The polypeptide is SH2 domain-containing protein 4A (SH2D4A) (Homo sapiens (Human)).